A 540-amino-acid chain; its full sequence is 2-isopropylmalate synthase (540 aa).

A Pyruvate carboxyltransferase domain is found at 8–271 (VLIFDTTLRD…NPFFGREEDS (264 aa)). Asp-17, His-208, His-210, and Asn-244 together coordinate Mn(2+). Residues 408–540 (QLKLVQVSCG…PVVLESRPTL (133 aa)) form a regulatory domain region.

The protein belongs to the alpha-IPM synthase/homocitrate synthase family. LeuA type 1 subfamily. As to quaternary structure, homodimer. Mn(2+) serves as cofactor.

It localises to the cytoplasm. It catalyses the reaction 3-methyl-2-oxobutanoate + acetyl-CoA + H2O = (2S)-2-isopropylmalate + CoA + H(+). It functions in the pathway amino-acid biosynthesis; L-leucine biosynthesis; L-leucine from 3-methyl-2-oxobutanoate: step 1/4. Its function is as follows. Catalyzes the condensation of the acetyl group of acetyl-CoA with 3-methyl-2-oxobutanoate (2-ketoisovalerate) to form 3-carboxy-3-hydroxy-4-methylpentanoate (2-isopropylmalate). This Synechococcus sp. (strain CC9605) protein is 2-isopropylmalate synthase.